Here is a 223-residue protein sequence, read N- to C-terminus: Kynurenine formamidase (223 aa).

Residue Phe-34 coordinates substrate. Residues His-64, His-68, and Asp-70 each contribute to the Zn(2+) site. Residue His-74 is the Proton donor/acceptor of the active site. Residues His-174 and Glu-186 each coordinate Zn(2+).

The protein belongs to the Cyclase 1 superfamily. KynB family. As to quaternary structure, homodimer. The cofactor is Zn(2+).

The catalysed reaction is N-formyl-L-kynurenine + H2O = L-kynurenine + formate + H(+). It participates in amino-acid degradation; L-tryptophan degradation via kynurenine pathway; L-kynurenine from L-tryptophan: step 2/2. Functionally, catalyzes the hydrolysis of N-formyl-L-kynurenine to L-kynurenine, the second step in the kynurenine pathway of tryptophan degradation. The chain is Kynurenine formamidase from Polaromonas naphthalenivorans (strain CJ2).